The chain runs to 609 residues: Isopenicillin N epimerase component 1 (609 aa).

185 to 196 lines the AMP pocket; it reads MLSGSGTTGLPK. The segment at 545–570 is disordered; it reads STDNHKHNKVPLRDEGVDPRSMGSKV.

This sequence belongs to the ATP-dependent AMP-binding enzyme family.

The catalysed reaction is isopenicillin N = penicillin N. It participates in antibiotic biosynthesis; cephalosporin C biosynthesis. In terms of biological role, together with cefD2, catalyzes the reversible isomerization between isopenicillin N and penicillin N. This two-component IPN epimerase system may function by two sequential steps, an activation of isopenicillin N by the acyl-CoA synthase component cefD1, followed by epimerization by the acyl-CoA racemase component cefD2. The sequence is that of Isopenicillin N epimerase component 1 (cefD1) from Hapsidospora chrysogena (Acremonium chrysogenum).